Here is a 184-residue protein sequence, read N- to C-terminus: Peptide deformylase (184 aa).

Cys-98 and His-140 together coordinate Fe cation. The active site involves Glu-141. His-144 contributes to the Fe cation binding site.

Belongs to the polypeptide deformylase family. Fe(2+) is required as a cofactor.

The catalysed reaction is N-terminal N-formyl-L-methionyl-[peptide] + H2O = N-terminal L-methionyl-[peptide] + formate. Removes the formyl group from the N-terminal Met of newly synthesized proteins. Requires at least a dipeptide for an efficient rate of reaction. N-terminal L-methionine is a prerequisite for activity but the enzyme has broad specificity at other positions. In Phocaeicola vulgatus (strain ATCC 8482 / DSM 1447 / JCM 5826 / CCUG 4940 / NBRC 14291 / NCTC 11154) (Bacteroides vulgatus), this protein is Peptide deformylase.